Consider the following 209-residue polypeptide: Potassium-transporting ATPase KdpC subunit (209 aa).

The chain crosses the membrane as a helical span at residues 11–31; it reads MILALTVLTGLAYPLAVTAVA. The tract at residues 188 to 209 is disordered; it reads AQAPTPRQPEPGHPEPGRPEVR. Positions 197 to 209 are enriched in basic and acidic residues; sequence EPGHPEPGRPEVR.

This sequence belongs to the KdpC family. In terms of assembly, the system is composed of three essential subunits: KdpA, KdpB and KdpC.

The protein resides in the cell inner membrane. In terms of biological role, part of the high-affinity ATP-driven potassium transport (or Kdp) system, which catalyzes the hydrolysis of ATP coupled with the electrogenic transport of potassium into the cytoplasm. This subunit acts as a catalytic chaperone that increases the ATP-binding affinity of the ATP-hydrolyzing subunit KdpB by the formation of a transient KdpB/KdpC/ATP ternary complex. This is Potassium-transporting ATPase KdpC subunit from Rhodospirillum centenum (strain ATCC 51521 / SW).